Consider the following 616-residue polypeptide: Chaperone protein HscA homolog (616 aa).

Belongs to the heat shock protein 70 family.

Probable chaperone. Has a low intrinsic ATPase activity which is markedly stimulated by HscB. This is Chaperone protein HscA homolog from Vibrio cholerae serotype O1 (strain ATCC 39315 / El Tor Inaba N16961).